The sequence spans 345 residues: uncharacterized protein (345 aa).

2 disordered regions span residues 1–24 (MGLE…ENRK) and 296–345 (MTAH…LNES). A compositionally biased stretch (acidic residues) spans 304-323 (SDYDNDDDTDGIINETDYEL). Over residues 324–345 (DTSQSEFATLTTSSNKSILNES) the composition is skewed to polar residues.

This is an uncharacterized protein from Schizosaccharomyces pombe (strain 972 / ATCC 24843) (Fission yeast).